The sequence spans 362 residues: Peptide chain release factor 1 (362 aa).

Gln237 carries the post-translational modification N5-methylglutamine.

This sequence belongs to the prokaryotic/mitochondrial release factor family. Post-translationally, methylated by PrmC. Methylation increases the termination efficiency of RF1.

The protein localises to the cytoplasm. Its function is as follows. Peptide chain release factor 1 directs the termination of translation in response to the peptide chain termination codons UAG and UAA. The sequence is that of Peptide chain release factor 1 from Vibrio atlanticus (strain LGP32) (Vibrio splendidus (strain Mel32)).